Consider the following 183-residue polypeptide: Apo-citrate lyase phosphoribosyl-dephospho-CoA transferase (183 aa).

It belongs to the CitX family.

The enzyme catalyses apo-[citrate lyase ACP] + 2'-(5''-triphospho-alpha-D-ribosyl)-3'-dephospho-CoA = holo-[citrate lyase ACP] + diphosphate. In terms of biological role, transfers 2-(5''-triphosphoribosyl)-3'-dephosphocoenzyme-A on a serine residue to the apo-acyl carrier protein (gamma chain) of the citrate lyase to yield holo-acyl carrier protein. This Shigella flexneri serotype 5b (strain 8401) protein is Apo-citrate lyase phosphoribosyl-dephospho-CoA transferase.